The primary structure comprises 309 residues: Ribonuclease Z (309 aa).

Zn(2+) contacts are provided by His63, His65, Asp67, His68, His145, Asp216, and His274. Asp67 (proton acceptor) is an active-site residue.

Belongs to the RNase Z family. As to quaternary structure, homodimer. Zn(2+) serves as cofactor.

The enzyme catalyses Endonucleolytic cleavage of RNA, removing extra 3' nucleotides from tRNA precursor, generating 3' termini of tRNAs. A 3'-hydroxy group is left at the tRNA terminus and a 5'-phosphoryl group is left at the trailer molecule.. In terms of biological role, zinc phosphodiesterase, which displays some tRNA 3'-processing endonuclease activity. Probably involved in tRNA maturation, by removing a 3'-trailer from precursor tRNA. The chain is Ribonuclease Z from Streptococcus thermophilus (strain CNRZ 1066).